Consider the following 458-residue polypeptide: Bifunctional protein GlmU (458 aa).

The segment at 1 to 224 (MTVIALAAGK…PKVAVGVNNQ (224 aa)) is pyrophosphorylase. UDP-N-acetyl-alpha-D-glucosamine contacts are provided by residues 6–9 (LAAG), lysine 20, glutamine 71, and 76–77 (GT). Residue aspartate 99 participates in Mg(2+) binding. UDP-N-acetyl-alpha-D-glucosamine is bound by residues glycine 136, glutamate 150, asparagine 165, and asparagine 222. Asparagine 222 is a binding site for Mg(2+). Residues 225–245 (LELARATRLLFKRKALRLMED) form a linker region. The tract at residues 246–458 (GVLMIDPRTV…TAETEEKEQV (213 aa)) is N-acetyltransferase. 2 residues coordinate UDP-N-acetyl-alpha-D-glucosamine: arginine 328 and lysine 346. Histidine 358 (proton acceptor) is an active-site residue. The UDP-N-acetyl-alpha-D-glucosamine site is built by tyrosine 361 and asparagine 372. Residues 381–382 (NY), serine 401, serine 419, and arginine 436 each bind acetyl-CoA.

It in the N-terminal section; belongs to the N-acetylglucosamine-1-phosphate uridyltransferase family. The protein in the C-terminal section; belongs to the transferase hexapeptide repeat family. As to quaternary structure, homotrimer. Mg(2+) serves as cofactor.

The protein localises to the cytoplasm. It catalyses the reaction alpha-D-glucosamine 1-phosphate + acetyl-CoA = N-acetyl-alpha-D-glucosamine 1-phosphate + CoA + H(+). It carries out the reaction N-acetyl-alpha-D-glucosamine 1-phosphate + UTP + H(+) = UDP-N-acetyl-alpha-D-glucosamine + diphosphate. The protein operates within nucleotide-sugar biosynthesis; UDP-N-acetyl-alpha-D-glucosamine biosynthesis; N-acetyl-alpha-D-glucosamine 1-phosphate from alpha-D-glucosamine 6-phosphate (route II): step 2/2. It functions in the pathway nucleotide-sugar biosynthesis; UDP-N-acetyl-alpha-D-glucosamine biosynthesis; UDP-N-acetyl-alpha-D-glucosamine from N-acetyl-alpha-D-glucosamine 1-phosphate: step 1/1. Its pathway is bacterial outer membrane biogenesis; LPS lipid A biosynthesis. Its function is as follows. Catalyzes the last two sequential reactions in the de novo biosynthetic pathway for UDP-N-acetylglucosamine (UDP-GlcNAc). The C-terminal domain catalyzes the transfer of acetyl group from acetyl coenzyme A to glucosamine-1-phosphate (GlcN-1-P) to produce N-acetylglucosamine-1-phosphate (GlcNAc-1-P), which is converted into UDP-GlcNAc by the transfer of uridine 5-monophosphate (from uridine 5-triphosphate), a reaction catalyzed by the N-terminal domain. The sequence is that of Bifunctional protein GlmU from Bdellovibrio bacteriovorus (strain ATCC 15356 / DSM 50701 / NCIMB 9529 / HD100).